The primary structure comprises 573 residues: (R)-mandelonitrile lyase 3 (573 aa).

Positions 1-27 are cleaved as a signal peptide; the sequence is MVKSTMSAVLLVLHIFVLHLQYSEVQS. N-linked (GlcNAc...) asparagine glycosylation is present at N30. Position 63-64 (63-64) interacts with FAD; it reads TA. N75 carries N-linked (GlcNAc...) asparagine glycosylation. FAD-binding positions include 82 to 83, V129, T133, and 137 to 140; these read ER and NAGV. Residues N145, N150, N162, and N218 are each glycosylated (N-linked (GlcNAc...) asparagine). V244 contacts FAD. 3 N-linked (GlcNAc...) asparagine glycosylation sites follow: N252, N267, and N309. C356 lines the substrate pocket. N-linked (GlcNAc...) asparagine glycans are attached at residues N380, N402, N420, and N467. A disulfide bond links C427 and C478. Y485 serves as a coordination point for substrate. FAD-binding positions include 486–487 and G515; that span reads WH. Catalysis depends on H487, which acts as the Proton donor. Catalysis depends on H525, which acts as the Proton acceptor. 526–527 provides a ligand contact to FAD; it reads PQ.

Belongs to the GMC oxidoreductase family. In terms of assembly, monomer. It depends on FAD as a cofactor.

It is found in the vacuole. It localises to the aleurone grain. The catalysed reaction is (R)-mandelonitrile = benzaldehyde + hydrogen cyanide. In terms of biological role, involved in cyanogenesis, the release of HCN from injured tissues. Catalyzes the stereospecific addition of HCN to a variety of aldehydes in vitro. It is a major seed constituent, and could have the additional role of a storage form for reduced nitrogen. The sequence is that of (R)-mandelonitrile lyase 3 (MDL3) from Prunus serotina (Black cherry).